A 447-amino-acid chain; its full sequence is Tubulin beta chain (447 aa).

GTP-binding residues include Gln-11, Glu-69, Ser-138, Gly-142, Thr-143, Gly-144, Asn-204, and Asn-226. Residue Glu-69 coordinates Mg(2+). Positions 424 to 447 are disordered; that stretch reads QYQEASVSEGEEEYDEEAPLEAEE. Acidic residues predominate over residues 432 to 447; sequence EGEEEYDEEAPLEAEE.

This sequence belongs to the tubulin family. Dimer of alpha and beta chains. A typical microtubule is a hollow water-filled tube with an outer diameter of 25 nm and an inner diameter of 15 nM. Alpha-beta heterodimers associate head-to-tail to form protofilaments running lengthwise along the microtubule wall with the beta-tubulin subunit facing the microtubule plus end conferring a structural polarity. Microtubules usually have 13 protofilaments but different protofilament numbers can be found in some organisms and specialized cells. Mg(2+) serves as cofactor.

It is found in the cytoplasm. It localises to the cytoskeleton. Its function is as follows. Tubulin is the major constituent of microtubules, a cylinder consisting of laterally associated linear protofilaments composed of alpha- and beta-tubulin heterodimers. Microtubules grow by the addition of GTP-tubulin dimers to the microtubule end, where a stabilizing cap forms. Below the cap, tubulin dimers are in GDP-bound state, owing to GTPase activity of alpha-tubulin. This chain is Tubulin beta chain (TUB1), found in Cochliobolus heterostrophus (Southern corn leaf blight fungus).